A 133-amino-acid chain; its full sequence is Ribosome-binding factor A (133 aa).

This sequence belongs to the RbfA family. In terms of assembly, monomer. Binds 30S ribosomal subunits, but not 50S ribosomal subunits or 70S ribosomes.

It localises to the cytoplasm. In terms of biological role, one of several proteins that assist in the late maturation steps of the functional core of the 30S ribosomal subunit. Associates with free 30S ribosomal subunits (but not with 30S subunits that are part of 70S ribosomes or polysomes). Required for efficient processing of 16S rRNA. May interact with the 5'-terminal helix region of 16S rRNA. This Pseudomonas fluorescens (strain Pf0-1) protein is Ribosome-binding factor A.